The sequence spans 423 residues: Probable electron transfer flavoprotein-quinone oxidoreductase YgcN (423 aa).

Residue 7–21 (IIIIGAGIAGTACAL) coordinates FAD.

The protein belongs to the ETF-QO/FixC family. FAD is required as a cofactor.

Its function is as follows. Probably accepts electrons from YgcQ/YgcR and reduces a quinone. This is Probable electron transfer flavoprotein-quinone oxidoreductase YgcN (ygcN) from Escherichia coli (strain K12).